The sequence spans 490 residues: Metal cation symporter ZIP14 (490 aa).

Positions 1–28 are cleaved as a signal peptide; sequence MKLLHPAFQSCLLLTLLGLWRTTPEAHA. Residues 29 to 155 lie on the Extracellular side of the membrane; it reads SSPGAPAISA…PSAVEVWGYG (127 aa). N-linked (GlcNAc...) asparagine glycans are attached at residues Asn75, Asn85, and Asn100. Residues 156–176 traverse the membrane as a helical segment; that stretch reads LLCVTVISLCSLLGASVVPFM. Topologically, residues 177–184 are cytoplasmic; that stretch reads KKTFYKRL. Residues 185–205 form a helical membrane-spanning segment; sequence LLYFIALAIGTLYSNALFQLI. Residues 206-222 are Extracellular-facing; that stretch reads PEAFGFNPLEDYYVSKS. The chain crosses the membrane as a helical span at residues 223-243; the sequence is AVVFGGFYLFFFTEKILKILL. The Cytoplasmic portion of the chain corresponds to 244 to 395; that stretch reads KQKNEHHHGH…LLNAGMSIQQ (152 aa). Residues 249–256 carry the HHHGHXHX-motif motif; that stretch reads HHHGHSHY. The short motif at 374-379 is the XEXPHE-motif element; sequence EEFPHE. The helical transmembrane segment at 396–416 threads the bilayer; it reads ALFFNFLSACCCYLGLAFGIL. Residues 417–422 lie on the Extracellular side of the membrane; that stretch reads AGSHFS. Residues 423-443 traverse the membrane as a helical segment; it reads ANWIFALAGGMFLYISLADMF. The Cytoplasmic portion of the chain corresponds to 444–458; that stretch reads PEMNEVCQEDERKGS. A helical membrane pass occupies residues 459–479; that stretch reads ILIPFVIQNLGLLTGFTIMVV. Residues 480 to 490 lie on the Extracellular side of the membrane; the sequence is LTMYSGQIQIG.

The protein belongs to the ZIP transporter (TC 2.A.5) family. In terms of assembly, homotrimer. Post-translationally, ubiquitinated. Ubiquitination occurs upon iron depletion. The ubiquitinated form undergoes proteasomal degradation. In terms of processing, N-glycosylated. N-glycosylation at Asn-100 is required for iron-regulated extraction of the transporter from membranes and subsequent proteasomal degradation.

It is found in the cell membrane. The protein resides in the apical cell membrane. It localises to the basolateral cell membrane. Its subcellular location is the early endosome membrane. The protein localises to the late endosome membrane. It is found in the lysosome membrane. The catalysed reaction is Zn(2+)(out) + 2 hydrogencarbonate(out) = Zn(2+)(in) + 2 hydrogencarbonate(in). It catalyses the reaction Mn(2+)(out) + 2 hydrogencarbonate(out) = Mn(2+)(in) + 2 hydrogencarbonate(in). It carries out the reaction Fe(2+)(out) + 2 hydrogencarbonate(out) = Fe(2+)(in) + 2 hydrogencarbonate(in). The enzyme catalyses Cd(2+)(out) + 2 hydrogencarbonate(out) = Cd(2+)(in) + 2 hydrogencarbonate(in). In terms of biological role, electroneutral transporter of the plasma membrane mediating the cellular uptake of the divalent metal cations zinc, manganese and iron that are important for tissue homeostasis, metabolism, development and immunity. Functions as an energy-dependent symporter, transporting through the membranes an electroneutral complex composed of a divalent metal cation and two bicarbonate anions. Beside these endogenous cellular substrates, can also import cadmium a non-essential metal which is cytotoxic and carcinogenic. Controls the cellular uptake by the intestinal epithelium of systemic zinc, which is in turn required to maintain tight junctions and the intestinal permeability. Modifies the activity of zinc-dependent phosphodiesterases, thereby indirectly regulating G protein-coupled receptor signaling pathways important for gluconeogenesis and chondrocyte differentiation. Regulates insulin receptor signaling, glucose uptake, glycogen synthesis and gluconeogenesis in hepatocytes through the zinc-dependent intracellular catabolism of insulin. Through zinc cellular uptake also plays a role in the adaptation of cells to endoplasmic reticulum stress. Major manganese transporter of the basolateral membrane of intestinal epithelial cells, it plays a central role in manganese systemic homeostasis through intestinal manganese uptake. Also involved in manganese extracellular uptake by cells of the blood-brain barrier. May also play a role in manganese and zinc homeostasis participating in their elimination from the blood through the hepatobiliary excretion. Also functions in the extracellular uptake of free iron. May also function intracellularly and mediate the transport from endosomes to cytosol of iron endocytosed by transferrin. Plays a role in innate immunity by regulating the expression of cytokines by activated macrophages. The chain is Metal cation symporter ZIP14 from Pongo abelii (Sumatran orangutan).